The chain runs to 165 residues: Phosphopantetheine adenylyltransferase (165 aa).

A substrate-binding site is contributed by Ser10. ATP contacts are provided by residues 10–11 and His18; that span reads SF. Residues Lys42, Thr79, and Arg93 each contribute to the substrate site. Residues 94–96, Glu104, and 129–135 each bind ATP; these read GLR and VRPITAT.

This sequence belongs to the bacterial CoaD family. In terms of assembly, homohexamer. Mg(2+) serves as cofactor.

It is found in the cytoplasm. It catalyses the reaction (R)-4'-phosphopantetheine + ATP + H(+) = 3'-dephospho-CoA + diphosphate. The protein operates within cofactor biosynthesis; coenzyme A biosynthesis; CoA from (R)-pantothenate: step 4/5. In terms of biological role, reversibly transfers an adenylyl group from ATP to 4'-phosphopantetheine, yielding dephospho-CoA (dPCoA) and pyrophosphate. The chain is Phosphopantetheine adenylyltransferase from Nitrobacter hamburgensis (strain DSM 10229 / NCIMB 13809 / X14).